Consider the following 431-residue polypeptide: Enolase (431 aa).

Glutamine 166 is a (2R)-2-phosphoglycerate binding site. Glutamate 208 acts as the Proton donor in catalysis. Residues aspartate 245, glutamate 288, and aspartate 315 each coordinate Mg(2+). Residues lysine 340, arginine 369, serine 370, and lysine 391 each contribute to the (2R)-2-phosphoglycerate site. Catalysis depends on lysine 340, which acts as the Proton acceptor.

This sequence belongs to the enolase family. Mg(2+) is required as a cofactor.

It localises to the cytoplasm. Its subcellular location is the secreted. The protein localises to the cell surface. The catalysed reaction is (2R)-2-phosphoglycerate = phosphoenolpyruvate + H2O. It participates in carbohydrate degradation; glycolysis; pyruvate from D-glyceraldehyde 3-phosphate: step 4/5. In terms of biological role, catalyzes the reversible conversion of 2-phosphoglycerate (2-PG) into phosphoenolpyruvate (PEP). It is essential for the degradation of carbohydrates via glycolysis. In Clostridium botulinum (strain Kyoto / Type A2), this protein is Enolase.